The following is a 226-amino-acid chain: Phosphoglycolate phosphatase (226 aa).

The active-site Nucleophile is the D9. Residues D9 and D11 each contribute to the Mg(2+) site. K150 contributes to the substrate binding site. Positions 173 and 177 each coordinate Mg(2+).

The protein belongs to the archaeal SPP-like hydrolase family. Mg(2+) is required as a cofactor.

It carries out the reaction 2-phosphoglycolate + H2O = glycolate + phosphate. Catalyzes the dephosphorylation of 2-phosphoglycolate. In Methanosarcina acetivorans (strain ATCC 35395 / DSM 2834 / JCM 12185 / C2A), this protein is Phosphoglycolate phosphatase.